The sequence spans 152 residues: MFRGASAINLDAKGRIAIPKRYRERLHVDFNSQLVITVDFDAACLLIYPLEAWKAIEAKLLLLSDTQGPERAMKRLLLGYAHECELDSNGRLLLPPPLRQYANLDKHAMLVGQLNKFELWDEAAWQQQIELSRETIQSDAFANSERLADFSL.

SpoVT-AbrB domains lie at 5–52 and 81–124; these read ASAI…PLEA and AHEC…DEAA.

This sequence belongs to the MraZ family. Forms oligomers.

The protein resides in the cytoplasm. The protein localises to the nucleoid. The chain is Transcriptional regulator MraZ from Shewanella loihica (strain ATCC BAA-1088 / PV-4).